The sequence spans 461 residues: Putative long chain fatty acid-CoA ligase VraA (461 aa).

Belongs to the ATP-dependent AMP-binding enzyme family.

In Staphylococcus haemolyticus (strain JCSC1435), this protein is Putative long chain fatty acid-CoA ligase VraA (vraA).